The following is a 249-amino-acid chain: 2,3-bisphosphoglycerate-dependent phosphoglycerate mutase (249 aa).

Substrate-binding positions include 8–15, 21–22, arginine 60, 87–90, lysine 98, 114–115, and 183–184; these read RHGESTWN, TG, ERHY, RR, and GN. The active-site Tele-phosphohistidine intermediate is the histidine 9. The active-site Proton donor/acceptor is the glutamate 87.

It belongs to the phosphoglycerate mutase family. BPG-dependent PGAM subfamily. Homodimer.

The enzyme catalyses (2R)-2-phosphoglycerate = (2R)-3-phosphoglycerate. The protein operates within carbohydrate degradation; glycolysis; pyruvate from D-glyceraldehyde 3-phosphate: step 3/5. In terms of biological role, catalyzes the interconversion of 2-phosphoglycerate and 3-phosphoglycerate. In Azoarcus sp. (strain BH72), this protein is 2,3-bisphosphoglycerate-dependent phosphoglycerate mutase.